The primary structure comprises 149 residues: Putative pre-16S rRNA nuclease (149 aa).

The protein belongs to the YqgF nuclease family.

It is found in the cytoplasm. In terms of biological role, could be a nuclease involved in processing of the 5'-end of pre-16S rRNA. This is Putative pre-16S rRNA nuclease from Synechococcus sp. (strain ATCC 27144 / PCC 6301 / SAUG 1402/1) (Anacystis nidulans).